Consider the following 236-residue polypeptide: Leucyl/phenylalanyl-tRNA--protein transferase (236 aa).

Residues methionine 1 to serine 13 show a composition bias toward polar residues. The interval methionine 1 to serine 22 is disordered.

The protein belongs to the L/F-transferase family.

Its subcellular location is the cytoplasm. It catalyses the reaction N-terminal L-lysyl-[protein] + L-leucyl-tRNA(Leu) = N-terminal L-leucyl-L-lysyl-[protein] + tRNA(Leu) + H(+). The enzyme catalyses N-terminal L-arginyl-[protein] + L-leucyl-tRNA(Leu) = N-terminal L-leucyl-L-arginyl-[protein] + tRNA(Leu) + H(+). It carries out the reaction L-phenylalanyl-tRNA(Phe) + an N-terminal L-alpha-aminoacyl-[protein] = an N-terminal L-phenylalanyl-L-alpha-aminoacyl-[protein] + tRNA(Phe). Functionally, functions in the N-end rule pathway of protein degradation where it conjugates Leu, Phe and, less efficiently, Met from aminoacyl-tRNAs to the N-termini of proteins containing an N-terminal arginine or lysine. The chain is Leucyl/phenylalanyl-tRNA--protein transferase from Shewanella piezotolerans (strain WP3 / JCM 13877).